A 143-amino-acid polypeptide reads, in one-letter code: Translation initiation factor 2 subunit beta (143 aa).

It belongs to the eIF-2-beta/eIF-5 family. As to quaternary structure, heterotrimer composed of an alpha, a beta and a gamma chain.

EIF-2 functions in the early steps of protein synthesis by forming a ternary complex with GTP and initiator tRNA. The chain is Translation initiation factor 2 subunit beta (eif2b) from Methanocaldococcus jannaschii (strain ATCC 43067 / DSM 2661 / JAL-1 / JCM 10045 / NBRC 100440) (Methanococcus jannaschii).